A 689-amino-acid chain; its full sequence is Methionine--tRNA ligase (689 aa).

Residues 15 to 25 (PYANGPVHIGH) carry the 'HIGH' region motif. Residues C147, C150, C160, and C163 each contribute to the Zn(2+) site. Positions 342-346 (KISTS) match the 'KMSKS' region motif. Position 345 (T345) interacts with ATP. The 102-residue stretch at 588-689 (DFAKMDIRVA…AVVNAGSMIG (102 aa)) folds into the tRNA-binding domain.

The protein belongs to the class-I aminoacyl-tRNA synthetase family. MetG type 1 subfamily. In terms of assembly, homodimer. Zn(2+) serves as cofactor.

Its subcellular location is the cytoplasm. It carries out the reaction tRNA(Met) + L-methionine + ATP = L-methionyl-tRNA(Met) + AMP + diphosphate. In terms of biological role, is required not only for elongation of protein synthesis but also for the initiation of all mRNA translation through initiator tRNA(fMet) aminoacylation. The protein is Methionine--tRNA ligase of Cytophaga hutchinsonii (strain ATCC 33406 / DSM 1761 / CIP 103989 / NBRC 15051 / NCIMB 9469 / D465).